Reading from the N-terminus, the 378-residue chain is Succinyl-diaminopimelate desuccinylase (378 aa).

His-67 provides a ligand contact to Zn(2+). Asp-69 is a catalytic residue. Asp-100 provides a ligand contact to Zn(2+). Glu-134 serves as the catalytic Proton acceptor. Positions 135, 163, and 349 each coordinate Zn(2+).

This sequence belongs to the peptidase M20A family. DapE subfamily. As to quaternary structure, homodimer. It depends on Zn(2+) as a cofactor. Co(2+) serves as cofactor.

It carries out the reaction N-succinyl-(2S,6S)-2,6-diaminopimelate + H2O = (2S,6S)-2,6-diaminopimelate + succinate. It functions in the pathway amino-acid biosynthesis; L-lysine biosynthesis via DAP pathway; LL-2,6-diaminopimelate from (S)-tetrahydrodipicolinate (succinylase route): step 3/3. Catalyzes the hydrolysis of N-succinyl-L,L-diaminopimelic acid (SDAP), forming succinate and LL-2,6-diaminopimelate (DAP), an intermediate involved in the bacterial biosynthesis of lysine and meso-diaminopimelic acid, an essential component of bacterial cell walls. This chain is Succinyl-diaminopimelate desuccinylase, found in Nitrosomonas eutropha (strain DSM 101675 / C91 / Nm57).